We begin with the raw amino-acid sequence, 677 residues long: O-fucosyltransferase 27 (677 aa).

A helical; Signal-anchor for type II membrane protein transmembrane segment spans residues 15–35; the sequence is WIGLLGLVLSAFSLLVHFLLA. Asn-130 carries N-linked (GlcNAc...) asparagine glycosylation. Residues 410 to 437 form a disordered region; sequence PPSIEVETKHDSLKSTRQRPQPLPPPPA. Residues Asn-542 and Asn-592 are each glycosylated (N-linked (GlcNAc...) asparagine). The tract at residues 619–677 is disordered; the sequence is NAEKEEDLDEEDLSSSGLFFGHKESGGNNNGNNETVNSEANNKEEGQLEDQEELEGSER. Over residues 622-631 the composition is skewed to acidic residues; sequence KEEDLDEEDL. Over residues 644 to 658 the composition is skewed to low complexity; that stretch reads GGNNNGNNETVNSEA. The N-linked (GlcNAc...) asparagine glycan is linked to Asn-651. Residues 665–677 show a composition bias toward acidic residues; that stretch reads QLEDQEELEGSER.

Belongs to the glycosyltransferase GT106 family.

The protein localises to the membrane. The protein operates within glycan metabolism. In Arabidopsis thaliana (Mouse-ear cress), this protein is O-fucosyltransferase 27.